The following is a 218-amino-acid chain: Adenylate kinase (218 aa).

10–15 (GAGKGT) lines the ATP pocket. Positions 30-59 (STGDMIRETIKSGSALGQELKKVLDAGELV) are NMP. Residues T31, R36, 57 to 59 (ELV), and Q92 each bind AMP. An LID region spans residues 122–159 (GRRIHPASGRTYHTKFNPPKVADKDDVTGEPLITRTDD). ATP contacts are provided by residues R123 and 132-133 (TY). R156 and R167 together coordinate AMP. Q202 serves as a coordination point for ATP.

This sequence belongs to the adenylate kinase family. In terms of assembly, monomer.

The protein resides in the cytoplasm. It carries out the reaction AMP + ATP = 2 ADP. It functions in the pathway purine metabolism; AMP biosynthesis via salvage pathway; AMP from ADP: step 1/1. Functionally, catalyzes the reversible transfer of the terminal phosphate group between ATP and AMP. Plays an important role in cellular energy homeostasis and in adenine nucleotide metabolism. The protein is Adenylate kinase of Francisella tularensis subsp. tularensis (strain FSC 198).